Reading from the N-terminus, the 181-residue chain is Adenine phosphoribosyltransferase (181 aa).

Belongs to the purine/pyrimidine phosphoribosyltransferase family. As to quaternary structure, homodimer.

Its subcellular location is the cytoplasm. It carries out the reaction AMP + diphosphate = 5-phospho-alpha-D-ribose 1-diphosphate + adenine. It functions in the pathway purine metabolism; AMP biosynthesis via salvage pathway; AMP from adenine: step 1/1. Catalyzes a salvage reaction resulting in the formation of AMP, that is energically less costly than de novo synthesis. This chain is Adenine phosphoribosyltransferase, found in Rhodopseudomonas palustris (strain ATCC BAA-98 / CGA009).